Here is a 428-residue protein sequence, read N- to C-terminus: Putative zinc metalloprotease SAR1238 (428 aa).

Histidine 21 lines the Zn(2+) pocket. Glutamate 22 is a catalytic residue. Zn(2+) is bound at residue histidine 25. 4 consecutive transmembrane segments (helical) span residues 172–194 (FLTLFAGPLFNFILALVLFIGLA), 309–331 (GSTYIFSAVVGMLASIFTGGFSF), 352–374 (IISLIGYTALLSVNLGIMNLIPI), and 401–420 (TTIIAIGAIFMVVIMILVTW). The PDZ domain occupies 186–269 (ALVLFIGLAY…TKSVELTPKK (84 aa)).

The protein belongs to the peptidase M50B family. The cofactor is Zn(2+).

The protein localises to the cell membrane. The chain is Putative zinc metalloprotease SAR1238 from Staphylococcus aureus (strain MRSA252).